Consider the following 301-residue polypeptide: Homoserine O-acetyltransferase (301 aa).

The active-site Acyl-thioester intermediate is the cysteine 142. Positions 163 and 192 each coordinate substrate. Histidine 235 (proton acceptor) is an active-site residue. The active site involves glutamate 237. Arginine 249 is a substrate binding site.

It belongs to the MetA family.

It localises to the cytoplasm. The catalysed reaction is L-homoserine + acetyl-CoA = O-acetyl-L-homoserine + CoA. The protein operates within amino-acid biosynthesis; L-methionine biosynthesis via de novo pathway; O-acetyl-L-homoserine from L-homoserine: step 1/1. Its function is as follows. Transfers an acetyl group from acetyl-CoA to L-homoserine, forming acetyl-L-homoserine. The polypeptide is Homoserine O-acetyltransferase (Bacillus subtilis (strain 168)).